We begin with the raw amino-acid sequence, 1441 residues long: uncharacterized protein (1441 aa).

Disordered regions lie at residues 1-95, 150-204, 224-289, 401-477, 529-661, 680-760, 776-810, 849-899, 980-1118, 1161-1185, 1209-1321, 1348-1402, and 1421-1441; these read MGFL…EVIS, NGGI…QQQF, KPHQ…GEGE, HSNG…QLHQ, RHES…QPQQ, LNKD…KSQT, RKSS…HIQQ, QQQF…TQQL, RGGS…DNNN, KSLK…NENN, NIES…YRSY, GHNS…HIFF, and LKFN…SILE. The segment covering 19–38 has biased composition (low complexity); the sequence is NDNSFDGGSSSYNNNNNNNN. Residues 39–56 show a composition bias toward polar residues; sequence QPITYTPTAIRSPNNKTM. Low complexity-rich tracts occupy residues 57–91, 153–187, 227–283, 416–445, 555–564, and 572–635; these read SQSQ…GNGN, ISQP…TTTP, QQQQ…SLQN, NNNN…GINN, GNTDGVNIDN, and NNNN…TNNT. A compositionally biased stretch (polar residues) spans 636 to 645; sequence ATPSVINGDS. 2 stretches are compositionally biased toward low complexity: residues 648-661 and 680-700; these read QEQP…QPQQ and LNKD…DDNN. The segment covering 703 to 720 has biased composition (basic and acidic residues); it reads SREEMENILKKSQQDSNK. Residues 729 to 751 show a composition bias toward polar residues; sequence EDSNSGSPTFQDFQSSAAASNVS. Low complexity-rich tracts occupy residues 780–810 and 849–880; these read DSLN…HIQQ and QQQF…NSGS. The segment covering 881–892 has biased composition (gly residues); sequence INGGSNSGGGGV. A compositionally biased stretch (polar residues) spans 981 to 994; it reads GGSTNRTTPPFLTP. A compositionally biased stretch (low complexity) spans 995–1067; the sequence is NTSQTNLSSL…NKQTANNTTN (73 aa). Positions 1068–1087 are enriched in polar residues; that stretch reads DFSFDQNTDLRSSTNSLTIG. The span at 1088 to 1118 shows a compositional bias: low complexity; the sequence is SNSNFSSLKNSLNLENPENNNNPDKNVDNNN. Composition is skewed to low complexity over residues 1225–1249 and 1257–1291; these read DNNN…SLRN and NISN…NNNE. A compositionally biased stretch (basic and acidic residues) spans 1362-1373; sequence RHKDSIGDKEMD.

This is an uncharacterized protein from Dictyostelium discoideum (Social amoeba).